The chain runs to 66 residues: Small vasohibin-binding protein (66 aa).

Over residues 1-23 (MDPPARKEKTKVKESVSRVEKAK) the composition is skewed to basic and acidic residues. A disordered region spans residues 1-31 (MDPPARKEKTKVKESVSRVEKAKQKSAQQEL). Residues 5–52 (ARKEKTKVKESVSRVEKAKQKSAQQELKQRQRAEIYALNRVMTELEQQ) adopt a coiled-coil conformation.

It belongs to the SVBP family. In terms of assembly, interacts with VASH1 and VASH2.

The protein resides in the cytoplasm. Its subcellular location is the secreted. It localises to the cytoskeleton. In terms of biological role, enhances the tyrosine carboxypeptidase activity of VASH1 and VASH2, thereby promoting the removal of the C-terminal tyrosine residue of alpha-tubulin. This activity is critical for spindle function and accurate chromosome segregation during mitosis since microtubule detyronisation regulates mitotic spindle length and postioning. Also required to enhance the solubility and secretion of VASH1 and VASH2. Plays a role in axon and excitatory synapse formation. The protein is Small vasohibin-binding protein of Homo sapiens (Human).